A 146-amino-acid polypeptide reads, in one-letter code: Transcriptional regulator MraZ (146 aa).

2 SpoVT-AbrB domains span residues 5 to 50 (SSFH…TFNE) and 77 to 120 (ACEC…SREQ).

Belongs to the MraZ family. In terms of assembly, forms oligomers.

The protein resides in the cytoplasm. The protein localises to the nucleoid. This Desulforapulum autotrophicum (strain ATCC 43914 / DSM 3382 / VKM B-1955 / HRM2) (Desulfobacterium autotrophicum) protein is Transcriptional regulator MraZ.